Consider the following 494-residue polypeptide: Alpha-amylase-related protein (494 aa).

Positions 1–20 (MIKFALALTLCLAGASLSLA) are cleaved as a signal peptide. Pyrrolidone carboxylic acid is present on Gln21. The cysteines at positions 48 and 104 are disulfide-linked. 3 residues coordinate Ca(2+): Asn118, Gln169, and Asp178. Cys157 and Cys171 form a disulfide bridge. Arg206 contributes to the chloride binding site. The active-site Nucleophile is the Asp208. His212 is a Ca(2+) binding site. Residue Glu245 is the Proton donor of the active site. Residues Asn308 and Arg343 each coordinate chloride. 3 disulfide bridges follow: Cys376-Cys382, Cys418-Cys441, and Cys448-Cys460.

The protein belongs to the glycosyl hydrolase 13 family. In terms of assembly, monomer. The cofactor is Ca(2+). It depends on chloride as a cofactor.

It is found in the secreted. It catalyses the reaction Endohydrolysis of (1-&gt;4)-alpha-D-glucosidic linkages in polysaccharides containing three or more (1-&gt;4)-alpha-linked D-glucose units.. The polypeptide is Alpha-amylase-related protein (Amyrel) (Drosophila bocqueti (Fruit fly)).